The chain runs to 188 residues: dCTP deaminase (188 aa).

Residue 109-114 (KSTYAR) coordinates dCTP. E135 (proton donor/acceptor) is an active-site residue. DCTP is bound by residues Q154, Y168, and Q178.

It belongs to the dCTP deaminase family. In terms of assembly, homotrimer.

The enzyme catalyses dCTP + H2O + H(+) = dUTP + NH4(+). Its pathway is pyrimidine metabolism; dUMP biosynthesis; dUMP from dCTP (dUTP route): step 1/2. Functionally, catalyzes the deamination of dCTP to dUTP. The chain is dCTP deaminase from Helicobacter pylori (strain Shi470).